Consider the following 262-residue polypeptide: MGLIRVLANLLILQLSYAQKSSELVIGGDECNINEHRFLAIVHTDISLCTGTLINQEWVLTAAHCDGGNMDIYLGVHNESVRYDDEEGRVPAEKFFCLSSRNFTKWDKDIMLIRLNIPVRNSAHIAPLSLPSSPPSVGSVCRVMGWGTITSPNETYPDVPHCANINLFDYEVCLAAYPEFGLPATSKTLCAGILEGGKDTCVGDAGGPLICNGQFQGILSWGDDPCAQPRLPAVYTKVFDHLDWIQSIIAGNTDATCPFVNF.

The first 18 residues, 1–18, serve as a signal peptide directing secretion; the sequence is MGLIRVLANLLILQLSYA. A propeptide spanning residues 19 to 24 is cleaved from the precursor; it reads QKSSEL. The 226-residue stretch at 25-250 folds into the Peptidase S1 domain; sequence VIGGDECNIN…HLDWIQSIIA (226 aa). 6 cysteine pairs are disulfide-bonded: Cys31-Cys162, Cys49-Cys65, Cys97-Cys257, Cys141-Cys211, Cys173-Cys190, and Cys201-Cys226. Residues Asn78, Asn102, and Asn153 are each glycosylated (N-linked (GlcNAc...) asparagine).

It belongs to the peptidase S1 family. Snake venom subfamily. As to quaternary structure, monomer. Expressed by the venom gland.

Its subcellular location is the secreted. The polypeptide is Inactive snake venom serine proteinase 13 (Crotalus adamanteus (Eastern diamondback rattlesnake)).